Reading from the N-terminus, the 509-residue chain is O-acetyltransferase anaAT (509 aa).

Belongs to the fumigaclavine B O-acetyltransferase family. As to quaternary structure, monomer.

It carries out the reaction (2R,3S,11R)-aszonalenin + acetyl-CoA = (2R,3S,11R)-acetylaszonalenin + CoA. Its pathway is alkaloid biosynthesis. Its function is as follows. O-acetyltransferase; part of the gene cluster that mediates the biosynthesis of the prenylated pyrroloindoline diketopiperazine acetylaszonalenin. The first step in the pathway is the formation of (R)-benzodiazepinedione by condensation of tryptophan and anthranilic acid catalyzed by the non-ribosomal peptide synthetase anaPS. The prenyltransferase anaPT then converts (R)-benzodiazepinedione to aszonalenin in the presence of dimethylallyl diphosphate (DMAPP) via C3-prenylation. The last step in the biosynthesis of acetylaszonalenin via acetylation of aszonalenin at position N1 catalyzed by anaAT. The polypeptide is O-acetyltransferase anaAT (Neosartorya fischeri (strain ATCC 1020 / DSM 3700 / CBS 544.65 / FGSC A1164 / JCM 1740 / NRRL 181 / WB 181) (Aspergillus fischerianus)).